A 102-amino-acid chain; its full sequence is MCQTMRCILVACVALALLAAGCRVEASNSRPPRKNDVNTMADAYKFLQDLDTYYGDRARVRFGKRGSLMDILRNHEMDNINLGKNANNGGEFARGFNEEEIF.

The N-terminal stretch at 1 to 26 (MCQTMRCILVACVALALLAAGCRVEA) is a signal peptide. The propeptide occupies 27–32 (SNSRPP). Phe62 bears the Phenylalanine amide mark. The propeptide occupies 66-102 (GSLMDILRNHEMDNINLGKNANNGGEFARGFNEEEIF).

This sequence belongs to the NPY family. Expressed in midgut, brain lobes and ventral nerve cord of larvae. Predominantly expressed in two pairs of protocerebral neurons in the larval CNS (at protein level). Intense expression is also seen in the fan-shaped body of the central complex and two lateral areas of the lower part of the central brain that appear to harbor the giant commissural interneurons of the giant fiber pathway (at protein level). Upon glucose feeding, two additional dNPFergic neurons are consistently detected on the ventromedial surface of the subesophageal ganglion (SEG) of third instars larvae. Expressed in a subset of sugar-responsive PAIN neurons in the thoracic body but is absent from other peripheral PAIN neurons.

It is found in the secreted. Its function is as follows. Integral part of the sensory system that mediates food signaling, providing the neural basis for the regulation of food response; coordinates larval foraging and social behavior changes during development. Required in dopaminergic (DA) neurons that innervate the mushroom body for satiety to suppress appetitive memory performance; a key factor in the internal state of hunger in the brain. NPF neurons coordinately modulate diverse sensory and motor neurons important for feeding, flight, and locomotion. NPF/NPFR pathway exerts its suppressive effect on larval aversion to diverse stressful stimuli (chemical stress and noxious heat) through attenuation of TRP channel-induced neuronal excitation. NPF neural signaling system plays a physiological role in acute modulation of alcohol sensitivity in adults, rather than a general response to intoxication by sedative agents. Activation and inhibition of the NPF system reduces and enhances ethanol preference, respectively. Sexual experience, the NPF system activity and ethanol consumption are all linked; sexual deprivation is a major contributor to enhanced ethanol preference. The polypeptide is Neuropeptide F (NPF) (Drosophila melanogaster (Fruit fly)).